A 203-amino-acid polypeptide reads, in one-letter code: MIAAADVKALRERTGAGMMDCKKALTEANGDMEKAIEYLRKKGLATAAKRAGKVASEGLVHAYIHGGGRIGVLIEVNCETDFVAKTEDFRDLVHNLAMQVAASRPEYVAREDVPEEVLAKEKEILRAQALNEGKPEKVVEKIIAGRLEKFYQENCLLEQPFIKDMDRTVQDLINEKIAKLGEKIVVRRFVRYEVGEGIVQSEE.

The involved in Mg(2+) ion dislocation from EF-Tu stretch occupies residues 80–83; it reads TDFV.

This sequence belongs to the EF-Ts family.

Its subcellular location is the cytoplasm. In terms of biological role, associates with the EF-Tu.GDP complex and induces the exchange of GDP to GTP. It remains bound to the aminoacyl-tRNA.EF-Tu.GTP complex up to the GTP hydrolysis stage on the ribosome. The protein is Elongation factor Ts of Moorella thermoacetica (strain ATCC 39073 / JCM 9320).